A 1323-amino-acid chain; its full sequence is Traf2 and NCK-interacting protein kinase (1323 aa).

The Protein kinase domain occupies 25 to 289; that stretch reads FELVELVGNG…TEQLMKHPFI (265 aa). ATP-binding positions include 31 to 39 and lysine 54; that span reads VGNGTYGQV. Aspartate 153 acts as the Proton acceptor in catalysis. Threonine 187 is modified (phosphothreonine). Disordered stretches follow at residues 284 to 347, 397 to 559, and 571 to 838; these read MKHP…LPGE, EQKE…LRPV, and SQGP…NEQY. A compositionally biased stretch (basic and acidic residues) spans 288-307; it reads FIRDQPNERQVRIQLKDHID. Positions 290 to 1010 are mediates interaction with NEDD4; that stretch reads RDQPNERQVR…EIRKYKKRFN (721 aa). Acidic residues predominate over residues 317–335; it reads DETEYEYSGSEEEEEENDS. Phosphoserine is present on residues serine 324 and serine 326. Basic and acidic residues-rich tracts occupy residues 397–470, 477–494, and 503–513; these read EQKE…ERDY, QRQE…HYKE, and AWAKEVEERSR. Phosphoserine is present on residues serine 531 and serine 541. Threonine 552 is subject to Phosphothreonine. A phosphoserine mark is found at serine 571, serine 579, serine 581, and serine 611. Residues 623–640 show a composition bias toward basic and acidic residues; sequence RIEKFDRSSWLRQEEDIP. Phosphoserine occurs at positions 649, 651, 659, 672, 678, 691, 735, 737, and 740. Low complexity predominate over residues 691-726; the sequence is SSLQRTSSGSSSSSSTPSSQPSSQGGSQPGSQAGSS. 2 stretches are compositionally biased toward basic and acidic residues: residues 746-760 and 772-790; these read EPSK…DITR and KELR…KKVT. The segment covering 797–810 has biased composition (acidic residues); sequence EESESSEEEEEDGE. Serine 922 is modified (phosphoserine). Positions 939–960 are disordered; the sequence is FVDPRVYQTSPTDEDEEDDESS. A compositionally biased stretch (acidic residues) spans 950-959; it reads TDEDEEDDES. A CNH domain is found at 1010–1297; that stretch reads NSEILCAALW…KFLCERNDKV (288 aa).

It belongs to the protein kinase superfamily. STE Ser/Thr protein kinase family. STE20 subfamily. Interacts (via the CNH domain) with RAP2A (GTP-bound form preferentially); the interaction is direct and required for the activation of TNIK by RAP2A. Interacts with NEDD4; recruits RAP2A to NEDD4. Interacts with TRAF2 and NCK. Interacts with TCF7L2/TCF4 and CTNNB1; the interaction is direct. Interacts with TANC1. Post-translationally, autophosphorylated. Autophosphorylation is activated by RAP2A and induces association to the cytoskeletal fraction.

It is found in the nucleus. The protein resides in the cytoplasm. The protein localises to the recycling endosome. It localises to the cytoskeleton. The enzyme catalyses L-seryl-[protein] + ATP = O-phospho-L-seryl-[protein] + ADP + H(+). The catalysed reaction is L-threonyl-[protein] + ATP = O-phospho-L-threonyl-[protein] + ADP + H(+). In terms of biological role, serine/threonine kinase that acts as an essential activator of the Wnt signaling pathway. Recruited to promoters of Wnt target genes and required to activate their expression. May act by phosphorylating TCF4/TCF7L2. Appears to act upstream of the JUN N-terminal pathway. May play a role in the response to environmental stress. Part of a signaling complex composed of NEDD4, RAP2A and TNIK which regulates neuronal dendrite extension and arborization during development. More generally, it may play a role in cytoskeletal rearrangements and regulate cell spreading. Phosphorylates SMAD1 on Thr-322. Activator of the Hippo signaling pathway which plays a pivotal role in organ size control and tumor suppression by restricting proliferation and promoting apoptosis. MAP4Ks act in parallel to and are partially redundant with STK3/MST2 and STK4/MST2 in the phosphorylation and activation of LATS1/2, and establish MAP4Ks as components of the expanded Hippo pathway. This is Traf2 and NCK-interacting protein kinase (Tnik) from Mus musculus (Mouse).